The primary structure comprises 626 residues: Chaperone protein HtpG (626 aa).

The interval 1-341 (MIKKEFKAES…SEDLSLNISR (341 aa)) is a; substrate-binding. The segment at 342–552 (EMLQHDRQLK…DGDVTIEMEK (211 aa)) is b. The tract at residues 553 to 626 (ILSAMPNNQE…FTNDICKLMS (74 aa)) is c.

The protein belongs to the heat shock protein 90 family. Homodimer.

It localises to the cytoplasm. Molecular chaperone. Has ATPase activity. The protein is Chaperone protein HtpG of Alkaliphilus metalliredigens (strain QYMF).